We begin with the raw amino-acid sequence, 457 residues long: Nuclear distribution protein PAC1 (457 aa).

The stretch at 73-106 (SSIVRLQRRIIELEKEIQELTDENENLRENGPSS) forms a coiled coil. WD repeat units follow at residues 126–165 (SAGASVTSVKLHPELPLVFIATDAGKLQCYDLMNYTMPVA), 169–211 (AHMR…LQLI), 216–257 (GHEH…CLKS), 260–299 (PHTEWVRCLDVMGDFVVTGSNDCTVRLSHWPTGRSLSFGT), 322–362 (SHRF…FVAH), 382–419 (GHSSWVRDVRVRGKHAFSCSDDRSIKVWDLSTCEVVRS), and 423–457 (LHSGFINCIDIDCGGLNRQLLVSGGADGKLVILMK).

Belongs to the WD repeat LIS1/nudF family. Self-associates. Interacts with NDL1 and dynein.

It is found in the cytoplasm. It localises to the cytoskeleton. The protein resides in the spindle pole. Functionally, positively regulates the activity of the minus-end directed microtubule motor protein dynein. Plays a central role in positioning the mitotic spindle at the bud neck during cell division. Targets cytoplasmic dynein to microtubule plus ends, thereby promoting dynein-mediated microtubule sliding along the bud cortex and consequently the movement of the mitotic spindle to the bud neck. The polypeptide is Nuclear distribution protein PAC1 (Lachancea thermotolerans (strain ATCC 56472 / CBS 6340 / NRRL Y-8284) (Yeast)).